Here is a 328-residue protein sequence, read N- to C-terminus: Carbonic anhydrase-related protein 10 (328 aa).

The Alpha-carbonic anhydrase domain maps to 31–301; it reads GWWAYKEVVQ…LNNRCIRTNI (271 aa).

This sequence belongs to the alpha-carbonic anhydrase family.

Its function is as follows. Does not have a catalytic activity. The polypeptide is Carbonic anhydrase-related protein 10 (CA10) (Macaca fascicularis (Crab-eating macaque)).